We begin with the raw amino-acid sequence, 289 residues long: Pantothenate synthetase (289 aa).

30 to 37 (MGYLHKGH) contributes to the ATP binding site. The active-site Proton donor is His37. Gln61 is a binding site for (R)-pantoate. Beta-alanine is bound at residue Gln61. ATP is bound at residue 147-150 (GEKD). Residue Gln153 participates in (R)-pantoate binding. Residues Val176 and 184-187 (CSSR) contribute to the ATP site.

Belongs to the pantothenate synthetase family. Homodimer.

It is found in the cytoplasm. The enzyme catalyses (R)-pantoate + beta-alanine + ATP = (R)-pantothenate + AMP + diphosphate + H(+). It functions in the pathway cofactor biosynthesis; (R)-pantothenate biosynthesis; (R)-pantothenate from (R)-pantoate and beta-alanine: step 1/1. Functionally, catalyzes the condensation of pantoate with beta-alanine in an ATP-dependent reaction via a pantoyl-adenylate intermediate. The sequence is that of Pantothenate synthetase from Allorhizobium ampelinum (strain ATCC BAA-846 / DSM 112012 / S4) (Agrobacterium vitis (strain S4)).